A 405-amino-acid polypeptide reads, in one-letter code: Serpin B12 (405 aa).

The interval 64–83 is disordered; it reads SQNESKEPDPCLKSNKQKAG.

The protein belongs to the serpin family. Ov-serpin subfamily. Interacts with SLFN12; as part of a pathway regulating cell differentiation. May interact with USP14. Expressed in many tissues, including brain, bone marrow, lymph node, heart, lung, liver, pancreas, testis, ovary, and intestine.

The protein resides in the cytoplasm. Its function is as follows. Inhibits trypsin and plasmin, but not thrombin, coagulation factor Xa, or urokinase-type plasminogen activator. May play a role in cell differentiation. The sequence is that of Serpin B12 (SERPINB12) from Homo sapiens (Human).